The sequence spans 89 residues: Large ribosomal subunit protein bL27 (89 aa).

Residues 1-23 (MAHKKAGGSSRNGRDSESKRLGV) form a disordered region.

The protein belongs to the bacterial ribosomal protein bL27 family.

The sequence is that of Large ribosomal subunit protein bL27 from Rhizobium meliloti (strain 1021) (Ensifer meliloti).